A 174-amino-acid chain; its full sequence is Disulfide bond formation protein B (174 aa).

Topologically, residues 1-14 are cytoplasmic; the sequence is MLNFLNICSKTRKS. The chain crosses the membrane as a helical span at residues 15 to 31; it reads WVLLIFTVVILELIALY. Residues 32 to 49 lie on the Periplasmic side of the membrane; it reads LQHIVLIKPCVLCVYQRC. Cys-41 and Cys-44 are joined by a disulfide. The helical transmembrane segment at 50 to 65 threads the bilayer; sequence ALCGIGIAGLIGTIAP. At 66–71 the chain is on the cytoplasmic side; that stretch reads FTPLRF. The helical transmembrane segment at 72-89 threads the bilayer; sequence FSIPIWIYSAWKGLLLAK. Residues 90–144 are Periplasmic-facing; the sequence is EYTDIQLHPSPFFMCDLFVQFPHWLPLNKWWPSMFDADGDCAEYKWYFLSLEISQ. A disulfide bridge links Cys-104 with Cys-130. The chain crosses the membrane as a helical span at residues 145–163; that stretch reads WMLIIFANYLIIAILVSLS. Residues 164-174 lie on the Cytoplasmic side of the membrane; the sequence is QIIDLKKWNNK.

This sequence belongs to the DsbB family.

It localises to the cell inner membrane. Functionally, required for disulfide bond formation in some periplasmic proteins. Acts by oxidizing the DsbA protein. This is Disulfide bond formation protein B from Blochmanniella pennsylvanica (strain BPEN).